The primary structure comprises 121 residues: NAD(P)H-quinone oxidoreductase subunit M (121 aa).

It belongs to the complex I NdhM subunit family. As to quaternary structure, NDH-1 can be composed of about 15 different subunits; different subcomplexes with different compositions have been identified which probably have different functions.

Its subcellular location is the cellular thylakoid membrane. The enzyme catalyses a plastoquinone + NADH + (n+1) H(+)(in) = a plastoquinol + NAD(+) + n H(+)(out). The catalysed reaction is a plastoquinone + NADPH + (n+1) H(+)(in) = a plastoquinol + NADP(+) + n H(+)(out). NDH-1 shuttles electrons from an unknown electron donor, via FMN and iron-sulfur (Fe-S) centers, to quinones in the respiratory and/or the photosynthetic chain. The immediate electron acceptor for the enzyme in this species is believed to be plastoquinone. Couples the redox reaction to proton translocation, and thus conserves the redox energy in a proton gradient. Cyanobacterial NDH-1 also plays a role in inorganic carbon-concentration. The polypeptide is NAD(P)H-quinone oxidoreductase subunit M (Synechococcus sp. (strain JA-2-3B'a(2-13)) (Cyanobacteria bacterium Yellowstone B-Prime)).